Reading from the N-terminus, the 834-residue chain is DNA gyrase subunit A (834 aa).

Residues 34-500 (LPDIRDGLKP…ADDIRDIEDI (467 aa)) enclose the Topo IIA-type catalytic domain. Tyrosine 122 functions as the O-(5'-phospho-DNA)-tyrosine intermediate in the catalytic mechanism. Positions 527-533 (QRRGGHG) match the GyrA-box motif. Residues 810 to 834 (LSSNENDDEVLSGSEEECSDTVSLR) form a disordered region. Over residues 814–828 (ENDDEVLSGSEEECS) the composition is skewed to acidic residues.

Belongs to the type II topoisomerase GyrA/ParC subunit family. In terms of assembly, heterotetramer, composed of two GyrA and two GyrB chains. In the heterotetramer, GyrA contains the active site tyrosine that forms a transient covalent intermediate with DNA, while GyrB binds cofactors and catalyzes ATP hydrolysis.

It localises to the cytoplasm. It carries out the reaction ATP-dependent breakage, passage and rejoining of double-stranded DNA.. Its function is as follows. A type II topoisomerase that negatively supercoils closed circular double-stranded (ds) DNA in an ATP-dependent manner to modulate DNA topology and maintain chromosomes in an underwound state. Negative supercoiling favors strand separation, and DNA replication, transcription, recombination and repair, all of which involve strand separation. Also able to catalyze the interconversion of other topological isomers of dsDNA rings, including catenanes and knotted rings. Type II topoisomerases break and join 2 DNA strands simultaneously in an ATP-dependent manner. The polypeptide is DNA gyrase subunit A (Chlamydia pneumoniae (Chlamydophila pneumoniae)).